A 447-amino-acid chain; its full sequence is Phosphoglucosamine mutase (447 aa).

Serine 104 serves as the catalytic Phosphoserine intermediate. Residues serine 104, aspartate 243, aspartate 245, and aspartate 247 each contribute to the Mg(2+) site. At serine 104 the chain carries Phosphoserine.

This sequence belongs to the phosphohexose mutase family. The cofactor is Mg(2+). In terms of processing, activated by phosphorylation.

The catalysed reaction is alpha-D-glucosamine 1-phosphate = D-glucosamine 6-phosphate. Catalyzes the conversion of glucosamine-6-phosphate to glucosamine-1-phosphate. The polypeptide is Phosphoglucosamine mutase (Corynebacterium glutamicum (strain R)).